Reading from the N-terminus, the 230-residue chain is Ureidoacrylate amidohydrolase RutB (230 aa).

Residue Asp-24 is the Proton acceptor of the active site. The active site involves Lys-133. Catalysis depends on Cys-166, which acts as the Nucleophile.

It belongs to the isochorismatase family. RutB subfamily.

The catalysed reaction is (Z)-3-ureidoacrylate + H2O + H(+) = (Z)-3-aminoacrylate + NH4(+) + CO2. It catalyses the reaction (Z)-3-ureidoacrylate + H2O = (Z)-3-aminoacrylate + carbamate + H(+). The enzyme catalyses (Z)-2-methylureidoacrylate + H2O + H(+) = (Z)-2-methylaminoacrylate + NH4(+) + CO2. Functionally, hydrolyzes ureidoacrylate to form aminoacrylate and carbamate. The carbamate hydrolyzes spontaneously, thereby releasing one of the nitrogen atoms of the pyrimidine ring as ammonia and one of its carbon atoms as CO2. This is Ureidoacrylate amidohydrolase RutB from Escherichia coli (strain B / BL21-DE3).